A 445-amino-acid polypeptide reads, in one-letter code: Histidinol dehydrogenase (445 aa).

Tyr-136, Gln-200, and Asn-228 together coordinate NAD(+). The substrate site is built by Thr-251, Gln-273, and His-276. Zn(2+) contacts are provided by Gln-273 and His-276. Active-site proton acceptor residues include Glu-342 and His-343. Positions 343, 376, 430, and 435 each coordinate substrate. Residue Asp-376 participates in Zn(2+) binding. His-435 lines the Zn(2+) pocket.

It belongs to the histidinol dehydrogenase family. Zn(2+) serves as cofactor.

The enzyme catalyses L-histidinol + 2 NAD(+) + H2O = L-histidine + 2 NADH + 3 H(+). It participates in amino-acid biosynthesis; L-histidine biosynthesis; L-histidine from 5-phospho-alpha-D-ribose 1-diphosphate: step 9/9. Functionally, catalyzes the sequential NAD-dependent oxidations of L-histidinol to L-histidinaldehyde and then to L-histidine. This Mycolicibacterium smegmatis (Mycobacterium smegmatis) protein is Histidinol dehydrogenase (hisD).